The chain runs to 182 residues: Keratin, high-sulfur matrix protein, B2D (182 aa).

6 tandem repeats follow at residues Pro27–Gln36, Pro37–Gln46, Pro47–Gln56, Pro57–Gln66, Pro67–Gln76, and Pro77–Glu86. The segment at Pro27–Glu86 is 6 X 10 AA tandem repeats.

The keratin products of mammalian epidermal derivatives such as wool and hair consist of microfibrils embedded in a rigid matrix of other proteins. The matrix proteins include the high-sulfur and high-tyrosine keratins, having molecular weights of 6-20 kDa, whereas the microfibrils contain the larger, low-sulfur keratins (40-56 kDa). The protein is Keratin, high-sulfur matrix protein, B2D of Ovis aries (Sheep).